A 591-amino-acid polypeptide reads, in one-letter code: V-type ATP synthase alpha chain (591 aa).

ATP is bound at residue 242-249 (GPFGAGKT).

The protein belongs to the ATPase alpha/beta chains family.

It carries out the reaction ATP + H2O + 4 H(+)(in) = ADP + phosphate + 5 H(+)(out). Functionally, produces ATP from ADP in the presence of a proton gradient across the membrane. The V-type alpha chain is a catalytic subunit. This chain is V-type ATP synthase alpha chain, found in Chlamydia trachomatis serovar L2 (strain ATCC VR-902B / DSM 19102 / 434/Bu).